Here is a 217-residue protein sequence, read N- to C-terminus: Probable transaldolase (217 aa).

Lysine 83 serves as the catalytic Schiff-base intermediate with substrate.

The protein belongs to the transaldolase family. Type 3B subfamily.

The protein resides in the cytoplasm. The catalysed reaction is D-sedoheptulose 7-phosphate + D-glyceraldehyde 3-phosphate = D-erythrose 4-phosphate + beta-D-fructose 6-phosphate. Its pathway is carbohydrate degradation; pentose phosphate pathway; D-glyceraldehyde 3-phosphate and beta-D-fructose 6-phosphate from D-ribose 5-phosphate and D-xylulose 5-phosphate (non-oxidative stage): step 2/3. Its function is as follows. Transaldolase is important for the balance of metabolites in the pentose-phosphate pathway. This Paracoccus denitrificans (strain Pd 1222) protein is Probable transaldolase.